The chain runs to 411 residues: CinA-like protein (411 aa).

Belongs to the CinA family.

This Dictyoglomus thermophilum (strain ATCC 35947 / DSM 3960 / H-6-12) protein is CinA-like protein.